The following is a 576-amino-acid chain: Proton pump-interactor 3B (576 aa).

The tract at residues 34 to 63 is disordered; that stretch reads SEVTTDEEEDTIFSGGDSSSGLAAEEDSSG. Coiled-coil stretches lie at residues 132-155 and 205-241; these read RMVIEEKKKEFDTLLEALRNLRCT and EKEASINRVKSMALELNEVKNELDAITWKINDLSDKL. Residues 369 to 381 are compositionally biased toward basic and acidic residues; that stretch reads RSEKVHKMNREDS. The tract at residues 369 to 395 is disordered; sequence RSEKVHKMNREDSSSNSSEDGNVITDK. Residues 411 to 467 adopt a coiled-coil conformation; that stretch reads KKKEEEIDEEALKERKREEQLEKARLVMERKRKLQEKAAAKAAIRAQKEAEKKLKAI. Residues 555 to 575 traverse the membrane as a helical segment; that stretch reads WVWGLSSAALAVSLVLVVLLL.

It belongs to the plant Proton pump-interactor protein family.

It is found in the cell membrane. The protein resides in the endoplasmic reticulum membrane. In terms of biological role, may regulate plasma membrane ATPase activity. The polypeptide is Proton pump-interactor 3B (PPI3B) (Arabidopsis thaliana (Mouse-ear cress)).